Reading from the N-terminus, the 624-residue chain is Probable pectinesterase/pectinesterase inhibitor 47 (624 aa).

The signal sequence occupies residues 1-19 (MQTHSSSLVFLALLCLSWA). A disordered region spans residues 24–88 (PTRPPSQPPS…PSPLPPNIAC (65 aa)). Over residues 25–84 (TRPPSQPPSHPPIQPSSQPPTQPPSQPPTQPPTQPPSHPPTQPPTPPPSQSPSQPSPLPP) the composition is skewed to pro residues. The tract at residues 74–236 (QSPSQPSPLP…TRLYSVSLGL (163 aa)) is pectinesterase inhibitor 47. N-linked (GlcNAc...) asparagine glycans are attached at residues Asn225, Asn330, Asn369, and Asn376. Positions 307-606 (AVTVGPYETD…FTVYNFTLGD (300 aa)) are pectinesterase 47. Thr385 serves as a coordination point for substrate. Asn387 carries N-linked (GlcNAc...) asparagine glycosylation. A substrate-binding site is contributed by Gln415. Asp438 serves as the catalytic Proton donor; for pectinesterase activity. A disulfide bridge connects residues Cys452 and Cys472. Asp459 serves as the catalytic Nucleophile; for pectinesterase activity. An N-linked (GlcNAc...) asparagine glycan is attached at Asn505. Substrate is bound by residues Arg527 and Trp529. N-linked (GlcNAc...) asparagine glycans are attached at residues Asn555, Asn596, and Asn601.

In the N-terminal section; belongs to the PMEI family. It in the C-terminal section; belongs to the pectinesterase family.

Its subcellular location is the secreted. The protein resides in the cell wall. It carries out the reaction [(1-&gt;4)-alpha-D-galacturonosyl methyl ester](n) + n H2O = [(1-&gt;4)-alpha-D-galacturonosyl](n) + n methanol + n H(+). The protein operates within glycan metabolism; pectin degradation; 2-dehydro-3-deoxy-D-gluconate from pectin: step 1/5. Its function is as follows. Acts in the modification of cell walls via demethylesterification of cell wall pectin. In Arabidopsis thaliana (Mouse-ear cress), this protein is Probable pectinesterase/pectinesterase inhibitor 47 (PME47).